The following is a 123-amino-acid chain: Testis-expressed protein 12 (123 aa).

The segment at 1 to 41 (MMANHLVKPDSRNCKRARELEPQVSDSPQVSSLGKSESSLS) is disordered. Basic and acidic residues predominate over residues 7-21 (VKPDSRNCKRARELE). The span at 31–41 (SSLGKSESSLS) shows a compositional bias: low complexity.

As to quaternary structure, interacts with SYCE2. As to expression, testis (at protein level). Detected in ovary. Expressed in both male and female germ cells.

It localises to the chromosome. Component of the transverse central element of synaptonemal complexes (SCS), formed between homologous chromosomes during meiotic prophase. Requires SYCP1 in order to be incorporated into the central element. This is Testis-expressed protein 12 (Tex12) from Mus musculus (Mouse).